The sequence spans 500 residues: Mucin-like protein 3 (500 aa).

The N-terminal stretch at 1 to 27 (MAQPTSGLYSTFGFFICLLFFPASWEA) is a signal peptide. At 28-429 (GANTFQELQK…GENNSFPVWA (402 aa)) the chain is on the extracellular side. Disordered regions lie at residues 55-198 (THRA…SQKP) and 275-324 (EGKT…PTAS). Basic and acidic residues predominate over residues 58–71 (ASSDQKTSRQHPPD). Positions 76–89 (TATQKAKNQCNTTR) are enriched in polar residues. N-linked (GlcNAc...) asparagine glycosylation is present at Asn-108. Basic and acidic residues-rich tracts occupy residues 111 to 123 (VRHEMPPASEKDL) and 132 to 142 (ARNERSADDPR). An N-linked (GlcNAc...) asparagine glycan is attached at Asn-148. Composition is skewed to polar residues over residues 159–178 (PRRNTSCMPSTRRTSLTTKS), 279–289 (SPASESSSQAQ), and 298–324 (TSASENTIPVSAKSTPSTEKATKPTAS). A helical membrane pass occupies residues 430–450 (IVIVILMAVIILLVFIGLILL). Topologically, residues 451–500 (VSCASRARHVLTQNSEEPEPQPEDKGSRNSYPVYLMEQQNLNLNQIPSPP) are cytoplasmic.

It localises to the cell membrane. The protein localises to the cytoplasm. In terms of biological role, may modulate NF-kappaB signaling and play a role in cell growth. This Mus musculus (Mouse) protein is Mucin-like protein 3.